The following is a 502-amino-acid chain: Probable glycine dehydrogenase (decarboxylating) subunit 2 (502 aa).

The residue at position 273 (Lys-273) is an N6-(pyridoxal phosphate)lysine.

Belongs to the GcvP family. C-terminal subunit subfamily. The glycine cleavage system is composed of four proteins: P, T, L and H. In this organism, the P 'protein' is a heterodimer of two subunits. It depends on pyridoxal 5'-phosphate as a cofactor.

It carries out the reaction N(6)-[(R)-lipoyl]-L-lysyl-[glycine-cleavage complex H protein] + glycine + H(+) = N(6)-[(R)-S(8)-aminomethyldihydrolipoyl]-L-lysyl-[glycine-cleavage complex H protein] + CO2. Its function is as follows. The glycine cleavage system catalyzes the degradation of glycine. The P protein binds the alpha-amino group of glycine through its pyridoxal phosphate cofactor; CO(2) is released and the remaining methylamine moiety is then transferred to the lipoamide cofactor of the H protein. This is Probable glycine dehydrogenase (decarboxylating) subunit 2 from Pyrococcus furiosus (strain ATCC 43587 / DSM 3638 / JCM 8422 / Vc1).